Reading from the N-terminus, the 292-residue chain is Undecaprenyl-diphosphatase (292 aa).

The next 5 membrane-spanning stretches (helical) occupy residues 87–107 (MGWYVIIGSIPIGVAGLLFEE), 113–133 (FRDLRLTALTLIVFGVLLGMV), 190–210 (AFLLAMPAVFASGLYKLKDIG), 219–239 (ATIVGTLVAFAVGYAVIAWFM), and 250–270 (FVYYRIALGILILALVSFGVL).

This sequence belongs to the UppP family.

Its subcellular location is the cell membrane. It catalyses the reaction di-trans,octa-cis-undecaprenyl diphosphate + H2O = di-trans,octa-cis-undecaprenyl phosphate + phosphate + H(+). Its function is as follows. Catalyzes the dephosphorylation of undecaprenyl diphosphate (UPP). Confers resistance to bacitracin. The sequence is that of Undecaprenyl-diphosphatase from Thermobifida fusca (strain YX).